Reading from the N-terminus, the 190-residue chain is Protein GrpE (190 aa).

The segment covering 1 to 11 (MSNQDEPQNSP) has biased composition (polar residues). The tract at residues 1 to 36 (MSNQDEPQNSPEEFAEDQQADVALEEASSDSSETAA) is disordered. Over residues 13-28 (EFAEDQQADVALEEAS) the composition is skewed to acidic residues.

The protein belongs to the GrpE family. Homodimer.

Its subcellular location is the cytoplasm. Functionally, participates actively in the response to hyperosmotic and heat shock by preventing the aggregation of stress-denatured proteins, in association with DnaK and GrpE. It is the nucleotide exchange factor for DnaK and may function as a thermosensor. Unfolded proteins bind initially to DnaJ; upon interaction with the DnaJ-bound protein, DnaK hydrolyzes its bound ATP, resulting in the formation of a stable complex. GrpE releases ADP from DnaK; ATP binding to DnaK triggers the release of the substrate protein, thus completing the reaction cycle. Several rounds of ATP-dependent interactions between DnaJ, DnaK and GrpE are required for fully efficient folding. This chain is Protein GrpE, found in Teredinibacter turnerae (strain ATCC 39867 / T7901).